A 218-amino-acid chain; its full sequence is Thiopurine S-methyltransferase (218 aa).

The S-adenosyl-L-methionine site is built by Trp11, Leu46, Glu67, and Arg122.

This sequence belongs to the class I-like SAM-binding methyltransferase superfamily. TPMT family.

It is found in the cytoplasm. The enzyme catalyses S-adenosyl-L-methionine + a thiopurine = S-adenosyl-L-homocysteine + a thiopurine S-methylether.. This Vibrio cholerae serotype O1 (strain ATCC 39315 / El Tor Inaba N16961) protein is Thiopurine S-methyltransferase.